We begin with the raw amino-acid sequence, 247 residues long: Triosephosphate isomerase (247 aa).

8-10 provides a ligand contact to substrate; sequence NWK. Catalysis depends on His-94, which acts as the Electrophile. Glu-165 acts as the Proton acceptor in catalysis. Substrate contacts are provided by Gly-171 and Ser-210.

This sequence belongs to the triosephosphate isomerase family. In terms of assembly, homodimer.

Its subcellular location is the cytoplasm. The catalysed reaction is D-glyceraldehyde 3-phosphate = dihydroxyacetone phosphate. Its pathway is carbohydrate biosynthesis; gluconeogenesis. It participates in carbohydrate degradation; glycolysis; D-glyceraldehyde 3-phosphate from glycerone phosphate: step 1/1. In terms of biological role, involved in the gluconeogenesis. Catalyzes stereospecifically the conversion of dihydroxyacetone phosphate (DHAP) to D-glyceraldehyde-3-phosphate (G3P). The chain is Triosephosphate isomerase from Aquifex aeolicus (strain VF5).